The chain runs to 102 residues: Large ribosomal subunit protein bL21 (102 aa).

Residues 79–91 (RKDSKRKKGHRQP) show a composition bias toward basic residues. The disordered stretch occupies residues 79–102 (RKDSKRKKGHRQPYTKLTIDKINA).

The protein belongs to the bacterial ribosomal protein bL21 family. Part of the 50S ribosomal subunit. Contacts protein L20.

Functionally, this protein binds to 23S rRNA in the presence of protein L20. This chain is Large ribosomal subunit protein bL21, found in Staphylococcus saprophyticus subsp. saprophyticus (strain ATCC 15305 / DSM 20229 / NCIMB 8711 / NCTC 7292 / S-41).